The sequence spans 474 residues: Cell division protein FtsP (474 aa).

Residues 1-27 (MSLSRRQFIQAAGLALGAGSLPLRAQA) constitute a signal peptide (tat-type signal). One can recognise a Plastocyanin-like domain in the interval 229–288 (WVRLRLLNASNARRYTLQLSDGRPLYVVASDQGFLPAPVAVQQLSLAPGERREVVIDMSQ).

The protein belongs to the FtsP family. Post-translationally, predicted to be exported by the Tat system. The position of the signal peptide cleavage has not been experimentally proven.

The protein resides in the periplasm. Its function is as follows. Cell division protein that is required for growth during stress conditions. May be involved in protecting or stabilizing the divisomal assembly under conditions of stress. This chain is Cell division protein FtsP, found in Yersinia pestis.